The sequence spans 535 residues: UDP-glucuronosyltransferase 1A1 (535 aa).

Positions 1–29 are cleaved as a signal peptide; sequence MSVVCRSSCSLLLLPCLLLCVLGPSASHA. N89, N297, and N435 each carry an N-linked (GlcNAc...) asparagine glycan. Residues 493 to 509 form a helical membrane-spanning segment; it reads VIGFLLAIVLTVVFIVY.

This sequence belongs to the UDP-glycosyltransferase family. As to quaternary structure, homodimers. Homooligomer. Interacts with UGT1A3, UGT1A4, UGT1A6, UGT1A7, UGT1A8, UGT1A9 and UGT1A10 to form heterodimers.

The protein localises to the endoplasmic reticulum membrane. The enzyme catalyses glucuronate acceptor + UDP-alpha-D-glucuronate = acceptor beta-D-glucuronoside + UDP + H(+). The catalysed reaction is 17beta-estradiol + UDP-alpha-D-glucuronate = 17beta-estradiol 3-O-(beta-D-glucuronate) + UDP + H(+). It carries out the reaction 2-hydroxyestrone + UDP-alpha-D-glucuronate = 2-hydroxyestrone 3-O-(beta-D-glucuronate) + UDP + H(+). It catalyses the reaction 2-hydroxy-17beta-estradiol + UDP-alpha-D-glucuronate = 2-hydroxy-17beta-estradiol 3-O-(beta-D-glucuronate) + UDP + H(+). The enzyme catalyses 2-methoxy-17beta-estradiol + UDP-alpha-D-glucuronate = 2-methoxy-17beta-estradiol 3-O-(beta-D-glucuronate) + UDP + H(+). The catalysed reaction is 17alpha-estradiol + UDP-alpha-D-glucuronate = 17alpha-estradiol 3-O-(beta-D-glucuronate) + UDP + H(+). It carries out the reaction 16beta,17beta-estriol + UDP-alpha-D-glucuronate = 16beta,17beta-estriol 16-O-(beta-D-glucuronate) + UDP + H(+). It catalyses the reaction losartan + UDP-alpha-D-glucuronate = losartan-2-N-beta-D-glucuronide + UDP. The enzyme catalyses prunetin + UDP-alpha-D-glucuronate = prunetin-4'-O-beta-D-glucuronide + UDP. The catalysed reaction is SN-38 + UDP-alpha-D-glucuronate = SN-38 O-beta-D-glucuronide + UDP + H(+). It carries out the reaction (4Z,15Z)-bilirubin IXalpha + UDP-alpha-D-glucuronate = (4Z,15Z)-bilirubin IXalpha C12-beta-D-glucuronoside + UDP. It catalyses the reaction (4Z,15Z)-bilirubin IXalpha + UDP-alpha-D-glucuronate = (4Z,15Z)-bilirubin IXalpha C8-beta-D-glucuronoside + UDP. The enzyme catalyses (4Z,15Z)-bilirubin IXalpha C8-beta-D-glucuronoside + UDP-alpha-D-glucuronate = (4Z,15Z)-bilirubin IXalpha C8,C12-beta-D-bisglucuronoside + UDP. The catalysed reaction is (4Z,15Z)-bilirubin IXalpha C12-beta-D-glucuronoside + UDP-alpha-D-glucuronate = (4Z,15Z)-bilirubin IXalpha C8,C12-beta-D-bisglucuronoside + UDP. It carries out the reaction 8-iso-prostaglandin F2alpha + UDP-alpha-D-glucuronate = 8-iso-prostaglandin F2alpha-glucuronide + UDP + H(+). It catalyses the reaction (5Z,8Z,11Z,14Z)-eicosatetraenoate + UDP-alpha-D-glucuronate = O-[(5Z),(8Z),(11Z),(14Z)-eicosatetraenoyl]-beta-D-glucuronate + UDP. The enzyme catalyses 15-hydroxy-(5Z,8Z,11Z,13E)-eicosatetraenoate + UDP-alpha-D-glucuronate = 15-O-(beta-D-glucuronosyl)-(5Z,8Z,11Z,14Z)-eicosatetraenoate + UDP + H(+). The catalysed reaction is 20-hydroxy-(5Z,8Z,11Z,14Z)-eicosatetraenoate + UDP-alpha-D-glucuronate = 20-O-(beta-D-glucuronosyl)-(5Z,8Z,11Z,14Z)-eicosatetraenoate + UDP + H(+). It carries out the reaction prostaglandin B1 + UDP-alpha-D-glucuronate = 15-O-(beta-D-glucuronosyl)-prostaglandin B1 + UDP + H(+). It catalyses the reaction (E)-ferulate + UDP-alpha-D-glucuronate = (E)-4-O-(beta-D-glucuronosyl)-ferulate + UDP + H(+). The enzyme catalyses (E)-ferulate + UDP-alpha-D-glucuronate = (E)-ferulic acid beta-D-glucuronate ester + UDP. Its function is as follows. UDP-glucuronosyltransferase (UGT) that catalyzes phase II biotransformation reactions in which lipophilic substrates are conjugated with glucuronic acid to increase the metabolite's water solubility, thereby facilitating excretion into either the urine or bile. Essential for the elimination and detoxification of drugs, xenobiotics and endogenous compounds. Catalyzes the glucuronidation of endogenous estrogen hormones such as estradiol, estrone and estriol. Involved in the glucuronidation of bilirubin, a degradation product occurring in the normal catabolic pathway that breaks down heme in vertebrates. Involved in the glucuronidation of arachidonic acid (AA) and AA-derived eicosanoids including 15-HETE, 20-HETE, PGB1 and F2-isoprostane (8-iso-PGF2alpha). Involved in the glucuronidation of the phytochemical ferulic acid at the phenolic or the carboxylic acid group. Also catalyzes the glucuronidation the isoflavones genistein, daidzein, glycitein, formononetin, biochanin A and prunetin, which are phytoestrogens with anticancer and cardiovascular properties. Involved in the glucuronidation of the AGTR1 angiotensin receptor antagonist losartan, a drug which can inhibit the effect of angiotensin II. Involved in the biotransformation of 7-ethyl-10-hydroxycamptothecin (SN-38), the pharmacologically active metabolite of the anticancer drug irinotecan. The sequence is that of UDP-glucuronosyltransferase 1A1 from Rattus norvegicus (Rat).